The sequence spans 229 residues: Large ribosomal subunit protein uL1 (229 aa).

Belongs to the universal ribosomal protein uL1 family. As to quaternary structure, part of the 50S ribosomal subunit.

Binds directly to 23S rRNA. The L1 stalk is quite mobile in the ribosome, and is involved in E site tRNA release. In terms of biological role, protein L1 is also a translational repressor protein, it controls the translation of the L11 operon by binding to its mRNA. This chain is Large ribosomal subunit protein uL1, found in Gemmatimonas aurantiaca (strain DSM 14586 / JCM 11422 / NBRC 100505 / T-27).